The following is a 121-amino-acid chain: Large ribosomal subunit protein bL20 (121 aa).

It belongs to the bacterial ribosomal protein bL20 family.

Binds directly to 23S ribosomal RNA and is necessary for the in vitro assembly process of the 50S ribosomal subunit. It is not involved in the protein synthesizing functions of that subunit. The sequence is that of Large ribosomal subunit protein bL20 from Orientia tsutsugamushi (strain Ikeda) (Rickettsia tsutsugamushi).